A 134-amino-acid chain; its full sequence is Large ribosomal subunit protein uL18 (134 aa).

Belongs to the universal ribosomal protein uL18 family. Part of the 50S ribosomal subunit; part of the 5S rRNA/L5/L18/L25 subcomplex. Contacts the 5S and 23S rRNAs.

This is one of the proteins that bind and probably mediate the attachment of the 5S RNA into the large ribosomal subunit, where it forms part of the central protuberance. This chain is Large ribosomal subunit protein uL18, found in Corynebacterium efficiens (strain DSM 44549 / YS-314 / AJ 12310 / JCM 11189 / NBRC 100395).